A 139-amino-acid chain; its full sequence is MKKSTLINSEVSRLIATLGHTDEITICDAGLPIPDHVQRIDLALAHGIPGFLDTVRVILSESQIEGVIIAEEFATVSPVHHDALITELAQESGLTGKPIAINYVSHEDFKVRTSQSRAVVRTGECTPYANVILQAGVVF.

Catalysis depends on His-20, which acts as the Proton donor. Residues Asp-28, His-106, and 128-130 (YAN) contribute to the substrate site.

Belongs to the RbsD / FucU family. RbsD subfamily. As to quaternary structure, homodecamer.

The protein resides in the cytoplasm. It catalyses the reaction beta-D-ribopyranose = beta-D-ribofuranose. It participates in carbohydrate metabolism; D-ribose degradation; D-ribose 5-phosphate from beta-D-ribopyranose: step 1/2. Functionally, catalyzes the interconversion of beta-pyran and beta-furan forms of D-ribose. This Vibrio campbellii (strain ATCC BAA-1116) protein is D-ribose pyranase.